Reading from the N-terminus, the 135-residue chain is Small ribosomal subunit protein bS16 (135 aa).

The segment covering 105–120 (DEKKKPVLKPKTEKAA) has biased composition (basic and acidic residues). A disordered region spans residues 105–135 (DEKKKPVLKPKTEKAAPEAAAPEAEATEEQA).

Belongs to the bacterial ribosomal protein bS16 family.

This Clavibacter sepedonicus (Clavibacter michiganensis subsp. sepedonicus) protein is Small ribosomal subunit protein bS16.